A 173-amino-acid chain; its full sequence is Protein tyrosine phosphatase type IVA 3 (173 aa).

Positions 8-161 constitute a Tyrosine-protein phosphatase domain; sequence APVEVSYKNM…YRPKQRLRFK (154 aa). Cys49 and Cys104 are oxidised to a cystine. Asp72 acts as the Proton donor in catalysis. The active-site Phosphocysteine intermediate is Cys104. Arg110 serves as a coordination point for substrate. Residue Cys170 is modified to Cysteine methyl ester. Residue Cys170 is the site of S-farnesyl cysteine attachment. A propeptide spans 171–173 (removed in mature form); that stretch reads CIM.

The protein belongs to the protein-tyrosine phosphatase family. Interacts with tubulin. Farnesylated. Farnesylation is required for membrane targeting. Unfarnesylated forms are shifted into the nucleus.

It is found in the cell membrane. The protein resides in the early endosome. It carries out the reaction O-phospho-L-tyrosyl-[protein] + H2O = L-tyrosyl-[protein] + phosphate. Inhibited by sodium orthovanadate and peroxovanadium compounds, and by pentamidine. In terms of biological role, protein tyrosine phosphatase which stimulates progression from G1 into S phase during mitosis. Enhances cell proliferation, cell motility and invasive activity, and promotes cancer metastasis. May be involved in the progression of cardiac hypertrophy by inhibiting intracellular calcium mobilization in response to angiotensin II. The chain is Protein tyrosine phosphatase type IVA 3 (PTP4A3) from Bos taurus (Bovine).